The sequence spans 298 residues: Mitochondrial dicarboxylate transporter (298 aa).

Solcar repeat units follow at residues 11–95 (KNIK…LKEN), 103–195 (TNMA…FKNY), and 205–289 (SKNY…LKKH). The next 6 membrane-spanning stretches (helical) occupy residues 17–37 (WWYGGAAGIFATMVTHPLDLA), 58–76 (ILANEGVVGLYSGLSAAVL), 105–126 (MAYLLPCSMFSGAIGGLAGNFA), 170–189 (GWKPNMVRGILMTASQVVTY), 211–231 (LTASLLAGLVATTVCSPADVM), and 265–283 (WLPSFTRLGPFTMLIFFAI).

The protein belongs to the mitochondrial carrier (TC 2.A.29) family. In terms of assembly, homodimer. Binds to the TIM22 translocation complex during import.

It is found in the mitochondrion inner membrane. Its function is as follows. Mitochondrial dicarboxylic transporter catalyzing the exchange of dicarboxylic acids like malate and succinate for inorganic phosphate. Required for growth on ethanol and acetate. The protein is Mitochondrial dicarboxylate transporter (DIC1) of Saccharomyces cerevisiae (strain ATCC 204508 / S288c) (Baker's yeast).